Reading from the N-terminus, the 561-residue chain is V-type proton ATPase catalytic subunit A (561 aa).

190–197 (GAFGCGKT) contributes to the ATP binding site.

This sequence belongs to the ATPase alpha/beta chains family. As to quaternary structure, V-ATPase is a heteromultimeric enzyme composed of a peripheral catalytic V1 complex (main components: subunits A, B, C, D, E, and F) attached to an integral membrane V0 proton pore complex (main component: the proteolipid protein). As to expression, high expression in the mesocotyl tip of etiolated seedlings compared to the base.

The catalysed reaction is ATP + H2O + 4 H(+)(in) = ADP + phosphate + 5 H(+)(out). Its function is as follows. Catalytic subunit of the peripheral V1 complex of vacuolar ATPase. V-ATPase vacuolar ATPase is responsible for acidifying a variety of intracellular compartments in eukaryotic cells. The protein is V-type proton ATPase catalytic subunit A of Zea mays (Maize).